Reading from the N-terminus, the 417-residue chain is Imidazolonepropionase (417 aa).

Histidine 77 and histidine 79 together coordinate Fe(3+). Zn(2+) is bound by residues histidine 77 and histidine 79. 4-imidazolone-5-propanoate contacts are provided by arginine 86, tyrosine 149, and histidine 182. Position 149 (tyrosine 149) interacts with N-formimidoyl-L-glutamate. Histidine 247 contributes to the Fe(3+) binding site. Histidine 247 serves as a coordination point for Zn(2+). Glutamine 250 contacts 4-imidazolone-5-propanoate. Fe(3+) is bound at residue aspartate 322. Aspartate 322 serves as a coordination point for Zn(2+). Residues asparagine 324 and glycine 326 each coordinate N-formimidoyl-L-glutamate. Residue threonine 327 participates in 4-imidazolone-5-propanoate binding.

It belongs to the metallo-dependent hydrolases superfamily. HutI family. Requires Zn(2+) as cofactor. The cofactor is Fe(3+).

Its subcellular location is the cytoplasm. It carries out the reaction 4-imidazolone-5-propanoate + H2O = N-formimidoyl-L-glutamate. It participates in amino-acid degradation; L-histidine degradation into L-glutamate; N-formimidoyl-L-glutamate from L-histidine: step 3/3. Functionally, catalyzes the hydrolytic cleavage of the carbon-nitrogen bond in imidazolone-5-propanoate to yield N-formimidoyl-L-glutamate. It is the third step in the universal histidine degradation pathway. In Cupriavidus necator (strain ATCC 17699 / DSM 428 / KCTC 22496 / NCIMB 10442 / H16 / Stanier 337) (Ralstonia eutropha), this protein is Imidazolonepropionase.